Here is a 300-residue protein sequence, read N- to C-terminus: Bifunctional protein FolD 2 (300 aa).

Residues glycine 165–serine 167, serine 190, and isoleucine 231 each bind NADP(+).

Belongs to the tetrahydrofolate dehydrogenase/cyclohydrolase family. As to quaternary structure, homodimer.

It catalyses the reaction (6R)-5,10-methylene-5,6,7,8-tetrahydrofolate + NADP(+) = (6R)-5,10-methenyltetrahydrofolate + NADPH. The catalysed reaction is (6R)-5,10-methenyltetrahydrofolate + H2O = (6R)-10-formyltetrahydrofolate + H(+). It participates in one-carbon metabolism; tetrahydrofolate interconversion. Functionally, catalyzes the oxidation of 5,10-methylenetetrahydrofolate to 5,10-methenyltetrahydrofolate and then the hydrolysis of 5,10-methenyltetrahydrofolate to 10-formyltetrahydrofolate. This Pseudomonas savastanoi pv. phaseolicola (strain 1448A / Race 6) (Pseudomonas syringae pv. phaseolicola (strain 1448A / Race 6)) protein is Bifunctional protein FolD 2.